The following is a 92-amino-acid chain: Small ribosomal subunit protein bS18A (92 aa).

It belongs to the bacterial ribosomal protein bS18 family. In terms of assembly, part of the 30S ribosomal subunit. Forms a tight heterodimer with protein bS6.

In terms of biological role, binds as a heterodimer with protein bS6 to the central domain of the 16S rRNA, where it helps stabilize the platform of the 30S subunit. This Cupriavidus pinatubonensis (strain JMP 134 / LMG 1197) (Cupriavidus necator (strain JMP 134)) protein is Small ribosomal subunit protein bS18A.